A 2346-amino-acid chain; its full sequence is Acetyl-CoA carboxylase 1 (2346 aa).

Position 1 is an N-acetylmethionine (Met1). 8 positions are modified to phosphoserine: Ser5, Ser23, Ser25, Ser29, Ser34, Ser48, Ser50, and Ser53. At Thr58 the chain carries Phosphothreonine. Ser78 bears the Phosphoserine mark. Residue Ser80 is modified to Phosphoserine; by AMPK. In terms of domain architecture, Biotin carboxylation spans 117–618 (VIEKVLIANN…DTGWLDRLIA (502 aa)). An ATP-grasp domain is found at 275–466 (SKRILNVPQE…LPAAQLQIAM (192 aa)). ATP is bound at residue 315-320 (GGGGKG). Residues Glu424, Glu437, and Asn439 each contribute to the Mg(2+) site. 3 residues coordinate Mn(2+): Glu424, Glu437, and Asn439. Residue Arg441 is part of the active site. The residue at position 610 (Thr610) is a Phosphothreonine. The Biotinyl-binding domain occupies 745 to 819 (FEKENDPSVL…DPGCVIAKMQ (75 aa)). The residue at position 786 (Lys786) is an N6-biotinyllysine. Phosphoserine is present on residues Ser835, Ser1201, Ser1216, and Ser1218. Thr1227 is modified (phosphothreonine). Ser1259, Ser1263, and Ser1273 each carry phosphoserine. Lys1334 is subject to N6-acetyllysine. One can recognise a CoA carboxyltransferase N-terminal domain in the interval 1576-1914 (PYVTKDLLQS…SVYSSVPLLN (339 aa)). The tract at residues 1576 to 2234 (PYVTKDLLQS…EDLVKKKIHN (659 aa)) is carboxyltransferase. 3 residues coordinate CoA: Arg1823, Lys2127, and Arg2129. The CoA carboxyltransferase C-terminal domain maps to 1918 to 2234 (PIDRVIEFVP…EDLVKKKIHN (317 aa)). Thr2153 is subject to Phosphothreonine.

In terms of assembly, monomer, homodimer, and homotetramer. Can form filamentous polymers. Interacts in its inactive phosphorylated form with the BRCT domains of BRCA1 which prevents ACACA dephosphorylation and inhibits lipid synthesis. Interacts with MID1IP1; interaction with MID1IP1 promotes oligomerization and increases its activity. Mg(2+) is required as a cofactor. It depends on Mn(2+) as a cofactor. The cofactor is biotin. Phosphorylation on Ser-1263 is required for interaction with BRCA1. Post-translationally, phosphorylation at Ser-80 by AMPK inactivates enzyme activity. In terms of processing, the biotin cofactor is covalently attached to the central biotinyl-binding domain and is required for the catalytic activity. Expressed at high levels in mammary gland.

The protein localises to the cytoplasm. It is found in the cytosol. The enzyme catalyses hydrogencarbonate + acetyl-CoA + ATP = malonyl-CoA + ADP + phosphate + H(+). The protein operates within lipid metabolism; malonyl-CoA biosynthesis; malonyl-CoA from acetyl-CoA: step 1/1. Its activity is regulated as follows. Inhibited by phosphorylation. Citrate promotes oligomerization of the protein into filaments that correspond to the most active form of the carboxylase. In terms of biological role, cytosolic enzyme that catalyzes the carboxylation of acetyl-CoA to malonyl-CoA, the first and rate-limiting step of de novo fatty acid biosynthesis. This is a 2 steps reaction starting with the ATP-dependent carboxylation of the biotin carried by the biotin carboxyl carrier (BCC) domain followed by the transfer of the carboxyl group from carboxylated biotin to acetyl-CoA. This is Acetyl-CoA carboxylase 1 from Ovis aries (Sheep).